A 287-amino-acid chain; its full sequence is AA9 family lytic polysaccharide monooxygenase C (287 aa).

The N-terminal stretch at 1 to 16 (MKSVLVALATATAVSA) is a signal peptide. Histidine 17 contributes to the Cu(2+) binding site. N-linked (GlcNAc...) asparagine glycosylation occurs at asparagine 22. 2 cysteine pairs are disulfide-bonded: cysteine 77–cysteine 230 and cysteine 200–cysteine 284. Residue histidine 114 coordinates Cu(2+). Histidine 216 and glutamine 225 together coordinate O2. Tyrosine 227 lines the Cu(2+) pocket.

Belongs to the polysaccharide monooxygenase AA9 family. The cofactor is Cu(2+).

Its subcellular location is the secreted. The enzyme catalyses [(1-&gt;4)-beta-D-glucosyl]n+m + reduced acceptor + O2 = 4-dehydro-beta-D-glucosyl-[(1-&gt;4)-beta-D-glucosyl]n-1 + [(1-&gt;4)-beta-D-glucosyl]m + acceptor + H2O.. Its function is as follows. Lytic polysaccharide monooxygenase (LPMO) that depolymerizes crystalline and amorphous polysaccharides via the oxidation of scissile alpha- or beta-(1-4)-glycosidic bonds, yielding C1 or C4 oxidation products. Catalysis by LPMOs requires the reduction of the active-site copper from Cu(II) to Cu(I) by a reducing agent and H(2)O(2) or O(2) as a cosubstrate. The sequence is that of AA9 family lytic polysaccharide monooxygenase C from Podospora anserina (strain S / ATCC MYA-4624 / DSM 980 / FGSC 10383) (Pleurage anserina).